The chain runs to 241 residues: Octanoyltransferase (241 aa).

In terms of domain architecture, BPL/LPL catalytic spans 43–228; it reads ADTPDEIWLV…RLTANLDGSP (186 aa). Substrate contacts are provided by residues 83-90, 159-161, and 172-174; these read RGGQITYH, ALG, and GVS. C190 serves as the catalytic Acyl-thioester intermediate.

Belongs to the LipB family.

It is found in the cytoplasm. The enzyme catalyses octanoyl-[ACP] + L-lysyl-[protein] = N(6)-octanoyl-L-lysyl-[protein] + holo-[ACP] + H(+). It participates in protein modification; protein lipoylation via endogenous pathway; protein N(6)-(lipoyl)lysine from octanoyl-[acyl-carrier-protein]: step 1/2. Functionally, catalyzes the transfer of endogenously produced octanoic acid from octanoyl-acyl-carrier-protein onto the lipoyl domains of lipoate-dependent enzymes. Lipoyl-ACP can also act as a substrate although octanoyl-ACP is likely to be the physiological substrate. The sequence is that of Octanoyltransferase from Paraburkholderia phytofirmans (strain DSM 17436 / LMG 22146 / PsJN) (Burkholderia phytofirmans).